The primary structure comprises 591 residues: BRCA1-associated protein (591 aa).

Ser-52 carries the phosphoserine modification. Residues 82-93 show a composition bias toward basic and acidic residues; sequence DEVRDTVEEKKP. A disordered region spans residues 82–124; it reads DEVRDTVEEKKPSAAPVSAQRSREQSESVNTAPESPSKQLPDQ. The segment covering 108-124 has biased composition (polar residues); that stretch reads ESVNTAPESPSKQLPDQ. Phosphoserine is present on residues Ser-116 and Ser-118. Residues 263-303 form an RING-type zinc finger; the sequence is CTVCLERMDESVNGILTTLCNHSFHSQCLQRWDDTTCPVCR. Residues 300–392 form a UBP-type; degenerate zinc finger; the sequence is PVCRYCQTPE…GKIVQYECEG (93 aa). 8 residues coordinate Zn(2+): Cys-316, Cys-319, Cys-328, Cys-331, Cys-336, His-343, His-347, and His-353. Residues 430–536 are a coiled coil; that stretch reads EKDTAEEINN…EIQEQLRDVM (107 aa). The segment at 563-591 is disordered; it reads IAMASAPNPPSSGAGGKLQSRKGRSKRGK. The segment covering 581–591 has biased composition (basic residues); sequence QSRKGRSKRGK.

In terms of assembly, interacts with the nuclear localization signal of BRCA1 and with the N-terminal of KSR1. The C-terminal portion of BRCA1 interacts with DDB1. In terms of tissue distribution, isoform 2 is highly expressed in testis, lower levels in brain, heart, lung, stomach, colon, uterus, liver and kidney. Isoform 1 is only expressed in the testis. Isoform 2 is predominant over isoform 1 in both fetal and adult testis.

It is found in the cytoplasm. It catalyses the reaction S-ubiquitinyl-[E2 ubiquitin-conjugating enzyme]-L-cysteine + [acceptor protein]-L-lysine = [E2 ubiquitin-conjugating enzyme]-L-cysteine + N(6)-ubiquitinyl-[acceptor protein]-L-lysine.. Its pathway is protein modification; protein ubiquitination. Negatively regulates MAP kinase activation by limiting the formation of Raf/MEK complexes probably by inactivation of the KSR1 scaffold protein. Also acts as a Ras responsive E3 ubiquitin ligase that, on activation of Ras, is modified by auto-polyubiquitination resulting in the release of inhibition of Raf/MEK complex formation. May also act as a cytoplasmic retention protein with a role in regulating nuclear transport. The sequence is that of BRCA1-associated protein from Mus musculus (Mouse).